The primary structure comprises 83 residues: Cell division protein ZapB (83 aa).

Residues 7-80 (EMLEKLEAKV…RVRTLLGKMD (74 aa)) adopt a coiled-coil conformation.

Belongs to the ZapB family. In terms of assembly, homodimer. The ends of the coiled-coil dimer bind to each other, forming polymers. Interacts with FtsZ.

The protein resides in the cytoplasm. Functionally, non-essential, abundant cell division factor that is required for proper Z-ring formation. It is recruited early to the divisome by direct interaction with FtsZ, stimulating Z-ring assembly and thereby promoting cell division earlier in the cell cycle. Its recruitment to the Z-ring requires functional FtsA or ZipA. The protein is Cell division protein ZapB of Photobacterium profundum (strain SS9).